The sequence spans 1000 residues: Probable coatomer subunit beta' (1000 aa).

WD repeat units lie at residues 13–52 (ARSDRVKCVDLHPVETWLLAALYNGNVHIWNYETQTLVKS), 55–94 (VCDVPVRAAKFVPRKSWVVTGSDDMHIRVFNYNTLERVHQ), 97–136 (AHSDYLRSLVVHPTLPYVISSSDDMLVKMWDWDNKWAMKQ), 140–180 (GHTH…PNFT), 183–224 (GHEK…CVQT), 227–266 (GHAQNVSSVCFHPELPLIITGSEDSTVRLWHANTYRLETT), and 351–391 (LGSS…NKDF). Residues 863-1000 (PRQTETQLKA…MDDLNLDEED (138 aa)) form a disordered region. The span at 901–915 (EPEEEEEQEEFDDDQ) shows a compositional bias: acidic residues. The span at 960-969 (SASSQQSAQD) shows a compositional bias: low complexity. The span at 970 to 1000 (FQDDTQWSDEDFGDAENGDLNMDDLNLDEED) shows a compositional bias: acidic residues.

It belongs to the WD repeat COPB2 family. In terms of assembly, oligomeric complex that consists of at least the alpha, beta, beta', gamma, delta, epsilon and zeta subunits.

The protein localises to the cytoplasm. It is found in the golgi apparatus membrane. It localises to the cytoplasmic vesicle. Its subcellular location is the COPI-coated vesicle membrane. The coatomer is a cytosolic protein complex that binds to dilysine motifs and reversibly associates with Golgi non-clathrin-coated vesicles, which further mediate biosynthetic protein transport from the ER, via the Golgi up to the trans Golgi network. Coatomer complex is required for budding from Golgi membranes, and is essential for the retrograde Golgi-to-ER transport of dilysine-tagged proteins. This is Probable coatomer subunit beta' (copb-2) from Caenorhabditis elegans.